Here is a 219-residue protein sequence, read N- to C-terminus: UPF0073 inner membrane protein YqfA (219 aa).

At 1–23 (MVQKPLIKQGYSLAEEIANSVSH) the chain is on the cytoplasmic side. A helical transmembrane segment spans residues 24–44 (GIGLVFGIVGLVLLLVQAVDL). The Periplasmic segment spans residues 45-53 (NASATAITS). The helical transmembrane segment at 54 to 74 (YSLYGGSMILLFLASTLYHAI) threads the bilayer. Over 75–90 (PHQRAKMWLKKFDHCA) the chain is Cytoplasmic. Residues 91-111 (IYLLIAGTYTPFLLVGLDSPL) form a helical membrane-spanning segment. The Periplasmic segment spans residues 112-113 (AR). The helical transmembrane segment at 114 to 134 (GLMIVIWSLALLGILFKLTIA) threads the bilayer. Residues 135–138 (HRFK) are Cytoplasmic-facing. Residues 139 to 159 (ILSLVTYLAMGWLSLVVIYEM) form a helical membrane-spanning segment. The Periplasmic segment spans residues 160-165 (AVKLAA). A helical membrane pass occupies residues 166–186 (GSVTLLAVGGVVYSLGVIFYV). Over 187-195 (CKRIPYNHA) the chain is Cytoplasmic. A helical membrane pass occupies residues 196–216 (IWHGFVLGGSVCHFLAIYLYI). Over 217–219 (GQA) the chain is Periplasmic.

The protein belongs to the UPF0073 (Hly-III) family.

The protein localises to the cell inner membrane. This Escherichia coli O157:H7 protein is UPF0073 inner membrane protein YqfA (yqfA).